The primary structure comprises 197 residues: Imidazoleglycerol-phosphate dehydratase (197 aa).

Belongs to the imidazoleglycerol-phosphate dehydratase family.

The protein localises to the cytoplasm. It carries out the reaction D-erythro-1-(imidazol-4-yl)glycerol 3-phosphate = 3-(imidazol-4-yl)-2-oxopropyl phosphate + H2O. The protein operates within amino-acid biosynthesis; L-histidine biosynthesis; L-histidine from 5-phospho-alpha-D-ribose 1-diphosphate: step 6/9. The protein is Imidazoleglycerol-phosphate dehydratase of Stutzerimonas stutzeri (strain A1501) (Pseudomonas stutzeri).